The chain runs to 500 residues: Beta-xylosidase (500 aa).

Glutamate 160 functions as the Proton donor in the catalytic mechanism. Glutamate 277 (nucleophile) is an active-site residue.

The protein belongs to the glycosyl hydrolase 39 family.

It carries out the reaction Hydrolysis of (1-&gt;4)-beta-D-xylans, to remove successive D-xylose residues from the non-reducing termini.. The chain is Beta-xylosidase (xynB) from Thermoanaerobacterium saccharolyticum (strain DSM 8691 / JW/SL-YS485).